The sequence spans 619 residues: Nucleolar GTP-binding protein 2 (619 aa).

The span at 1-10 (MGTGKKEKSR) shows a compositional bias: basic and acidic residues. The tract at residues 1-24 (MGTGKKEKSRIQRQGKVTGDPKVK) is disordered. The CP-type G domain occupies 222–383 (WNELYKVIDS…LIDCPGIVPP (162 aa)). GTP is bound by residues 332 to 339 (GYPNVGKS) and 376 to 380 (DCPGI). The tract at residues 473 to 619 (PWFTPAPEKE…PPKKQRRSRK (147 aa)) is disordered. A compositionally biased stretch (basic and acidic residues) spans 489-500 (MEGREGRYGEMS). A compositionally biased stretch (acidic residues) spans 536–546 (SDSDSEVEEAA). Basic and acidic residues predominate over residues 547–556 (EEKGEEKSTA). The segment covering 565 to 603 (SSDEEEDGEEEGSDVEDDEEGSDLDIEGASELEESESEA) has biased composition (acidic residues).

The protein belongs to the TRAFAC class YlqF/YawG GTPase family. NOG2 subfamily.

It localises to the nucleus. The protein resides in the nucleolus. GTPase that associates with pre-60S ribosomal subunits in the nucleolus and is required for their nuclear export and maturation. The sequence is that of Nucleolar GTP-binding protein 2 (nog-2) from Neurospora crassa (strain ATCC 24698 / 74-OR23-1A / CBS 708.71 / DSM 1257 / FGSC 987).